Consider the following 365-residue polypeptide: Chorismate synthase (365 aa).

Residues 41-60 (MQHDLDRRRPGTSRYTTARR) are disordered. NADP(+)-binding residues include Arg48 and Arg54. Residues 125–127 (RSS), 238–239 (NA), Gly278, 293–297 (KPTSS), and Arg319 each bind FMN.

It belongs to the chorismate synthase family. As to quaternary structure, homotetramer. It depends on FMNH2 as a cofactor.

It catalyses the reaction 5-O-(1-carboxyvinyl)-3-phosphoshikimate = chorismate + phosphate. It participates in metabolic intermediate biosynthesis; chorismate biosynthesis; chorismate from D-erythrose 4-phosphate and phosphoenolpyruvate: step 7/7. Catalyzes the anti-1,4-elimination of the C-3 phosphate and the C-6 proR hydrogen from 5-enolpyruvylshikimate-3-phosphate (EPSP) to yield chorismate, which is the branch point compound that serves as the starting substrate for the three terminal pathways of aromatic amino acid biosynthesis. This reaction introduces a second double bond into the aromatic ring system. The protein is Chorismate synthase of Shewanella amazonensis (strain ATCC BAA-1098 / SB2B).